The sequence spans 365 residues: 3-dehydroquinate synthase (365 aa).

Residues 72–77 (SGEKEK), 130–131 (TT), lysine 142, and lysine 151 contribute to the NAD(+) site. Positions 184, 247, and 264 each coordinate Zn(2+).

The protein belongs to the sugar phosphate cyclases superfamily. Dehydroquinate synthase family. Requires Co(2+) as cofactor. It depends on Zn(2+) as a cofactor. NAD(+) is required as a cofactor.

Its subcellular location is the cytoplasm. It catalyses the reaction 7-phospho-2-dehydro-3-deoxy-D-arabino-heptonate = 3-dehydroquinate + phosphate. The protein operates within metabolic intermediate biosynthesis; chorismate biosynthesis; chorismate from D-erythrose 4-phosphate and phosphoenolpyruvate: step 2/7. In terms of biological role, catalyzes the conversion of 3-deoxy-D-arabino-heptulosonate 7-phosphate (DAHP) to dehydroquinate (DHQ). The polypeptide is 3-dehydroquinate synthase (Bacillus cereus (strain AH187)).